The following is a 534-amino-acid chain: MKGGIADSWQREKLATMESPEEPGASMDENYFVNYTFKDRSHSGRVAQGIMKLCLEEELFADVTISVEGREFQLHRLVLSAQSCFFRSMFTSNLKEAHNRVIVLQDVSESVFQLLVDYIYHGTVKLRADELQEIYEVSDMYQLTSLFEECSRFLARTVQVGNCLQVMWLADRHSDPELYTAAKHCAKTHLAQLQSTEEFLHLPHHLLTDIISDGVPCSQNPTEAIEAWINFNKEEREAFAESLRTSLKEIGENVHIYLIGKESSRTHSLAVSLHCAEDDSISVSGQNSLCHQITAACKHGGDLYVVGGSIPRRMWKCNNATVDWEWCAPLPRDRLQHTLVSVPGKDAIYSLGGKTLQDTLSNAVIYYRVGDNVWTETTQLEVAVSGAAGANLNGIIYLLGGEENDLDFFTKPSRLIQCFDTETDKCHVKPYVLPFAGRMHAAVHKDLVFIVAEGDSLVCYNPLLDSFTRLCLPEAWSSAPSLWKIASCNGSIYVFRDRYKKGDANTYKLDPATSAVTVTRGIKVLLTNLQFVLA.

The 68-residue stretch at 61–128 folds into the BTB domain; it reads ADVTISVEGR…IYHGTVKLRA (68 aa). The BACK domain occupies 163–255; that stretch reads CLQVMWLADR…SLKEIGENVH (93 aa). 5 Kelch repeats span residues 255–301, 302–344, 347–394, 396–446, and 448–497; these read HIYL…KHGG, DLYV…SVPG, AIYS…NLNG, IYLL…VHKD, and VFIV…VFRD.

In terms of assembly, component of the BCR(KBTBD4) E3 ubiquitin ligase complex, at least composed of CUL3, KBTBD4 and RBX1.

In terms of biological role, substrate-specific adapter of a BCR (BTB-CUL3-RBX1) E3 ubiquitin ligase complex which targets CoREST corepressor complex components RCOR1, KDM1A/LSD1 and HDAC2 for proteasomal degradation. RCOR1 is likely to be the primary target while degradation of KDM1A and HDAC2 is likely due to their association with RCOR1. Also targets RCOR3, MIER2 and MIER3 for proteasomal degradation as well as associated proteins ZNF217 and RREB1. Degradation is dependent on the presence of an ELM2 domain in the target proteins. The chain is Kelch repeat and BTB domain-containing protein 4 (Kbtbd4) from Mus musculus (Mouse).